Reading from the N-terminus, the 406-residue chain is Tyrosine--tRNA ligase (406 aa).

Tyrosine 39 provides a ligand contact to L-tyrosine. The short motif at 44–53 (PTADSLHVGH) is the 'HIGH' region element. The L-tyrosine site is built by tyrosine 172 and glutamine 176. Positions 232 to 236 (KMGKT) match the 'KMSKS' region motif. Residue lysine 235 participates in ATP binding. One can recognise an S4 RNA-binding domain in the interval 344–404 (KELLDVLVDR…LGKKKFYNIV (61 aa)).

Belongs to the class-I aminoacyl-tRNA synthetase family. TyrS type 1 subfamily. As to quaternary structure, homodimer.

It is found in the cytoplasm. The catalysed reaction is tRNA(Tyr) + L-tyrosine + ATP = L-tyrosyl-tRNA(Tyr) + AMP + diphosphate + H(+). Catalyzes the attachment of tyrosine to tRNA(Tyr) in a two-step reaction: tyrosine is first activated by ATP to form Tyr-AMP and then transferred to the acceptor end of tRNA(Tyr). The protein is Tyrosine--tRNA ligase of Fusobacterium nucleatum subsp. nucleatum (strain ATCC 25586 / DSM 15643 / BCRC 10681 / CIP 101130 / JCM 8532 / KCTC 2640 / LMG 13131 / VPI 4355).